The following is a 224-amino-acid chain: Urease accessory protein UreF (224 aa).

The protein belongs to the UreF family. As to quaternary structure, ureD, UreF and UreG form a complex that acts as a GTP-hydrolysis-dependent molecular chaperone, activating the urease apoprotein by helping to assemble the nickel containing metallocenter of UreC. The UreE protein probably delivers the nickel.

It localises to the cytoplasm. In terms of biological role, required for maturation of urease via the functional incorporation of the urease nickel metallocenter. This Pseudomonas putida (strain W619) protein is Urease accessory protein UreF.